The primary structure comprises 74 residues: U4-theraphotoxin-Cg1a (74 aa).

The signal sequence occupies residues 1–19 (MNATIFAFLLLLNLAMHNA). The propeptide occupies 20 to 39 (TEQSSETDMDDTLLIPEINR). 3 cysteine pairs are disulfide-bonded: C42/C56, C49/C61, and C55/C71.

This sequence belongs to the neurotoxin 36 family. 01 subfamily. In terms of tissue distribution, expressed by the venom gland.

Its subcellular location is the secreted. Functionally, probable ion channel inhibitor. The protein is U4-theraphotoxin-Cg1a of Chilobrachys guangxiensis (Chinese earth tiger tarantula).